The primary structure comprises 356 residues: Vanillin synthase, chloroplastic (356 aa).

N-linked (GlcNAc...) asparagine glycosylation is present at asparagine 122. Disulfide bonds link cysteine 159–cysteine 202 and cysteine 193–cysteine 235. Residue cysteine 162 is part of the active site. An N-linked (GlcNAc...) asparagine glycan is attached at asparagine 251. A disulfide bond links cysteine 293 and cysteine 343. Active-site residues include histidine 302 and asparagine 322.

It belongs to the peptidase C1 family. As to quaternary structure, forms homodimers, homotrimers and homotetramers. Accumulates in the inner part of vanilla pods (at protein level). Expressed in single cells located a few cell layers from the inner epidermis.

The protein resides in the plastid. It is found in the chloroplast. It carries out the reaction (E)-ferulate + H2O = vanillin + acetate. It catalyses the reaction 4-O-beta-D-glucosyl-trans-ferulate + H2O = 4-O-beta-D-glucosyl-vanillin + acetate. Its pathway is aromatic compound metabolism; phenylpropanoid biosynthesis. Functionally, involved in the biosynthesis of vanillin (4-hydroxy-3-methoxy-benzaldehyde) and derivative natural products, key components of vanilla pods flavor. Catalyzes the double carbon bond cleavage of ferulic acid to vanillin and of their respective glucosides via a coupled non-oxidative hydratase/lyase reaction. Inactive toward p-coumaric acid, caffeic acid and their glucosides derivatives. The sequence is that of Vanillin synthase, chloroplastic from Vanilla planifolia (Vanilla).